We begin with the raw amino-acid sequence, 461 residues long: Propionyl-CoA carboxylase regulator (461 aa).

One can recognise an HTH cro/C1-type domain in the interval L11–L65. Positions Q22 to N41 form a DNA-binding region, H-T-H motif.

This sequence belongs to the short-chain fatty acyl-CoA assimilation regulator (ScfR) family.

Its function is as follows. Transcriptional regulator that controls propionyl-CoA assimilation through the methylmalonyl-CoA pathway via regulation of pccB expression. This Cereibacter sphaeroides (strain ATCC 17023 / DSM 158 / JCM 6121 / CCUG 31486 / LMG 2827 / NBRC 12203 / NCIMB 8253 / ATH 2.4.1.) (Rhodobacter sphaeroides) protein is Propionyl-CoA carboxylase regulator.